A 497-amino-acid polypeptide reads, in one-letter code: Serine/arginine-rich protein PSR (497 aa).

Residues 1–19 form the signal peptide; sequence MYSRCIALVFVGLLASSLA. The Extracellular segment spans residues 20-366; that stretch reads ANCYGPAGKL…HHGLSSQKLG (347 aa). Asparagine 92, asparagine 193, asparagine 202, asparagine 261, and asparagine 283 each carry an N-linked (GlcNAc...) asparagine glycan. A helical transmembrane segment spans residues 367-387; it reads LAIGLPIAGVFLIILIAAAII. The Cytoplasmic portion of the chain corresponds to 388–497; it reads YYRKRRESEK…ESASRDSDSD (110 aa). The tract at residues 424–450 is necessary for phosphorylation by PSRPK in vitro; sequence MGSKTMQAMLDMRDDDESEHDSDDGYG. Residues 436–447 show a composition bias toward acidic residues; the sequence is RDDDESEHDSDD. The segment at 436–497 is disordered; it reads RDDDESEHDS…ESASRDSDSD (62 aa). The segment covering 459-471 has biased composition (basic residues); sequence GRSRSRSRSRSVS. Over residues 476 to 497 the composition is skewed to basic and acidic residues; it reads GSRDARSESDPGESASRDSDSD.

Post-translationally, phosphorylated on serine residues in the RS domain by PSRPK.

It localises to the membrane. The protein is Serine/arginine-rich protein PSR of Physarum polycephalum (Slime mold).